The sequence spans 337 residues: Diacylglycerol O-acyltransferase 2-like protein 6 (337 aa).

A run of 2 helical transmembrane segments spans residues 22-42 and 102-122; these read MPVY…FLVF and YIIA…NFAT.

The protein belongs to the diacylglycerol acyltransferase family.

It is found in the endoplasmic reticulum membrane. It catalyses the reaction 1,2-di-(9Z-octadecenoyl)-sn-glycerol + (9Z)-octadecenoyl-CoA = 1,2,3-tri-(9Z-octadecenoyl)-glycerol + CoA. In terms of biological role, diglyceride acyltransferase that uses fatty acyl-CoA as substrate. Particularly active with oleate as a substrate. Has no wax synthase activity to produce wax esters. The polypeptide is Diacylglycerol O-acyltransferase 2-like protein 6 (DGAT2L6) (Bos taurus (Bovine)).